Here is a 594-residue protein sequence, read N- to C-terminus: Elongation factor 4 (594 aa).

Residues 2–184 (KNIRNFSIIA…TIVAKVPAPE (183 aa)) enclose the tr-type G domain. GTP is bound by residues 14-19 (DHGKST) and 131-134 (NKID).

This sequence belongs to the TRAFAC class translation factor GTPase superfamily. Classic translation factor GTPase family. LepA subfamily.

The protein resides in the cell inner membrane. The catalysed reaction is GTP + H2O = GDP + phosphate + H(+). Functionally, required for accurate and efficient protein synthesis under certain stress conditions. May act as a fidelity factor of the translation reaction, by catalyzing a one-codon backward translocation of tRNAs on improperly translocated ribosomes. Back-translocation proceeds from a post-translocation (POST) complex to a pre-translocation (PRE) complex, thus giving elongation factor G a second chance to translocate the tRNAs correctly. Binds to ribosomes in a GTP-dependent manner. This is Elongation factor 4 from Francisella tularensis subsp. tularensis (strain WY96-3418).